Consider the following 202-residue polypeptide: Small ribosomal subunit protein uS4 (202 aa).

The interval 23 to 42 (RKAARRSYPPGQHGQARRKR) is disordered. One can recognise an S4 RNA-binding domain in the interval 90-154 (MRLDNLVFRL…SRKLVTANLE (65 aa)).

Belongs to the universal ribosomal protein uS4 family. As to quaternary structure, part of the 30S ribosomal subunit. Contacts protein S5. The interaction surface between S4 and S5 is involved in control of translational fidelity.

Functionally, one of the primary rRNA binding proteins, it binds directly to 16S rRNA where it nucleates assembly of the body of the 30S subunit. With S5 and S12 plays an important role in translational accuracy. The polypeptide is Small ribosomal subunit protein uS4 (Synechococcus elongatus (strain ATCC 33912 / PCC 7942 / FACHB-805) (Anacystis nidulans R2)).